We begin with the raw amino-acid sequence, 474 residues long: MWTVQNRESLGLLSFPVMVAMVCCAHSSNEPSNMSYVKETVDRLLKGYDIRLRPDFGGPPVDVGMRIDVASIDMVSEVNMDYTLTMYFQQSWKDKRLSYSGIPLNLTLDNRVADQLWVPDTYFLNDKKSFVHGVTVKNRMIRLHPDGTVLYGLRITTTAACMMDLRRYPLDEQNCTLEIESYGYTTDDIEFYWNGGEGAVTGVNKIELPQFSIVDYKMVSKKVEFTTGAYPRLSLSFRLKRNIGYFILQTYMPSTLITILSWVSFWINYDASAARVALGITTVLTMTTISTHLRETLPKIPYVKAIDIYLMGCFVFVFLALLEYAFVNYIFFGKGPQKKGASKQDQSANEKNRLEMNKVQVDAHGNILLSTLEIRNETSGSEVLTGVSDPKATMYSYDSASIQYRKPLSSREGFGRGLDRHGVPGKGRIRRRASQLKVKIPDLTDVNSIDKWSRMFFPITFSLFNVVYWLYYVH.

Positions 1-25 (MWTVQNRESLGLLSFPVMVAMVCCA) are cleaved as a signal peptide. Residues 26–245 (HSSNEPSNMS…SFRLKRNIGY (220 aa)) lie on the Extracellular side of the membrane. Residues N33 and N105 are each glycosylated (N-linked (GlcNAc...) asparagine). Y122 is a histamine binding site. C161 and C175 form a disulfide bridge. N174 is a glycosylation site (N-linked (GlcNAc...) asparagine). Residues 181-182 (SY) and T227 each bind histamine. 4-aminobutanoate is bound by residues Y182 and T227. The next 3 membrane-spanning stretches (helical) occupy residues 246-267 (FILQ…SFWI), 271-293 (ASAA…STHL), and 305-327 (AIDI…YAFV). The Cytoplasmic portion of the chain corresponds to 328–451 (NYIFFGKGPQ…DLTDVNSIDK (124 aa)). The helical transmembrane segment at 452 to 473 (WSRMFFPITFSLFNVVYWLYYV) threads the bilayer.

Belongs to the ligand-gated ion channel (TC 1.A.9) family. Gamma-aminobutyric acid receptor (TC 1.A.9.5) subfamily. GABRB1 sub-subfamily. In terms of assembly, heteropentamer, formed by a combination of alpha (GABRA1-6), beta (GABRB1-3), gamma (GABRG1-3), delta (GABRD), epsilon (GABRE), rho (GABRR1-3), pi (GABRP) and theta (GABRQ) chains, each subunit exhibiting distinct physiological and pharmacological properties. Binds UBQLN1.

The protein localises to the postsynaptic cell membrane. It localises to the cell membrane. The catalysed reaction is chloride(in) = chloride(out). Potentiated by histamine. Its function is as follows. Beta subunit of the heteropentameric ligand-gated chloride channel gated by gamma-aminobutyric acid (GABA), a major inhibitory neurotransmitter in the brain. GABA-gated chloride channels, also named GABA(A) receptors (GABAAR), consist of five subunits arranged around a central pore and contain GABA active binding site(s) located at the alpha and beta subunit interface(s). When activated by GABA, GABAARs selectively allow the flow of chloride anions across the cell membrane down their electrochemical gradient. Chloride influx into the postsynaptic neuron following GABAAR opening decreases the neuron ability to generate a new action potential, thereby reducing nerve transmission. Beta-containing GABAARs can simultaneously bind GABA and histamine where histamine binds at the interface of two neighboring beta subunits, which may be involved in the regulation of sleep and wakefulness. This Mus musculus (Mouse) protein is Gamma-aminobutyric acid receptor subunit beta-1.